Reading from the N-terminus, the 126-residue chain is Holo-[acyl-carrier-protein] synthase (126 aa).

Positions 9 and 58 each coordinate Mg(2+).

The protein belongs to the P-Pant transferase superfamily. AcpS family. Requires Mg(2+) as cofactor.

The protein resides in the cytoplasm. The catalysed reaction is apo-[ACP] + CoA = holo-[ACP] + adenosine 3',5'-bisphosphate + H(+). Functionally, transfers the 4'-phosphopantetheine moiety from coenzyme A to a Ser of acyl-carrier-protein. The protein is Holo-[acyl-carrier-protein] synthase of Yersinia pseudotuberculosis serotype I (strain IP32953).